The primary structure comprises 182 residues: uncharacterized protein (182 aa).

The region spanning 55 to 182 is the N-acetyltransferase domain; the sequence is VNLHDLEKLC…GVKGMFWYPL (128 aa).

Belongs to the acetyltransferase family. Ycf52 subfamily.

The protein resides in the plastid. The protein localises to the chloroplast. This is an uncharacterized protein from Gracilaria tenuistipitata var. liui (Red alga).